The chain runs to 298 residues: 4-diphosphocytidyl-2-C-methyl-D-erythritol kinase (298 aa).

Lys19 is a catalytic residue. 106 to 116 (PVASGIGGGSA) is an ATP binding site. Residue Asp148 is part of the active site.

This sequence belongs to the GHMP kinase family. IspE subfamily.

The enzyme catalyses 4-CDP-2-C-methyl-D-erythritol + ATP = 4-CDP-2-C-methyl-D-erythritol 2-phosphate + ADP + H(+). It participates in isoprenoid biosynthesis; isopentenyl diphosphate biosynthesis via DXP pathway; isopentenyl diphosphate from 1-deoxy-D-xylulose 5-phosphate: step 3/6. Functionally, catalyzes the phosphorylation of the position 2 hydroxy group of 4-diphosphocytidyl-2C-methyl-D-erythritol. This chain is 4-diphosphocytidyl-2-C-methyl-D-erythritol kinase, found in Rhizobium leguminosarum bv. trifolii (strain WSM2304).